Reading from the N-terminus, the 72-residue chain is MDMKLLAAGIAVLAGIGAGIGIGIATAGALEATARQPEASDKIQSLFIMGAGLSEATAIYGLVVSIILLFVA.

The next 2 helical transmembrane spans lie at 5–25 (LLAAGIAVLAGIGAGIGIGIA) and 51–71 (AGLSEATAIYGLVVSIILLFV).

This sequence belongs to the ATPase C chain family. In terms of assembly, F-type ATPases have 2 components, F(1) - the catalytic core - and F(0) - the membrane proton channel. F(1) has five subunits: alpha(3), beta(3), gamma(1), delta(1), epsilon(1). F(0) has three main subunits: a(1), b(2) and c(10-14). The alpha and beta chains form an alternating ring which encloses part of the gamma chain. F(1) is attached to F(0) by a central stalk formed by the gamma and epsilon chains, while a peripheral stalk is formed by the delta and b chains.

Its subcellular location is the cell membrane. F(1)F(0) ATP synthase produces ATP from ADP in the presence of a proton or sodium gradient. F-type ATPases consist of two structural domains, F(1) containing the extramembraneous catalytic core and F(0) containing the membrane proton channel, linked together by a central stalk and a peripheral stalk. During catalysis, ATP synthesis in the catalytic domain of F(1) is coupled via a rotary mechanism of the central stalk subunits to proton translocation. Its function is as follows. Key component of the F(0) channel; it plays a direct role in translocation across the membrane. A homomeric c-ring of between 10-14 subunits forms the central stalk rotor element with the F(1) delta and epsilon subunits. This chain is ATP synthase subunit c, found in Clostridium perfringens (strain ATCC 13124 / DSM 756 / JCM 1290 / NCIMB 6125 / NCTC 8237 / Type A).